The sequence spans 769 residues: Probable beta-glucosidase M (769 aa).

The first 22 residues, 1 to 22 (MHSNLGLAGLAGLLATASVCLS), serve as a signal peptide directing secretion. Asparagine 28, asparagine 75, and asparagine 262 each carry an N-linked (GlcNAc...) asparagine glycan. Aspartate 290 is a catalytic residue. Residues asparagine 318, asparagine 325, asparagine 437, and asparagine 546 are each glycosylated (N-linked (GlcNAc...) asparagine).

It belongs to the glycosyl hydrolase 3 family.

It is found in the secreted. The enzyme catalyses Hydrolysis of terminal, non-reducing beta-D-glucosyl residues with release of beta-D-glucose.. It participates in glycan metabolism; cellulose degradation. Its function is as follows. Beta-glucosidases are one of a number of cellulolytic enzymes involved in the degradation of cellulosic biomass. Catalyzes the last step releasing glucose from the inhibitory cellobiose. The protein is Probable beta-glucosidase M (bglM) of Neosartorya fischeri (strain ATCC 1020 / DSM 3700 / CBS 544.65 / FGSC A1164 / JCM 1740 / NRRL 181 / WB 181) (Aspergillus fischerianus).